The primary structure comprises 524 residues: AAA ATPase forming ring-shaped complexes (524 aa).

Residues 1–29 (MGMGQEKHTDAASQSRDPEAVAAHENDQL) form a disordered region. Positions 22–59 (AAHENDQLRQRNHALAKALTRATEELRKAKAQLEQFMA) form a coiled coil. Residue 250–255 (GNGKTL) participates in ATP binding.

It belongs to the AAA ATPase family. In terms of assembly, homohexamer. Assembles into a hexameric ring structure.

The chain is AAA ATPase forming ring-shaped complexes from Bifidobacterium animalis subsp. lactis (strain BB-12).